The primary structure comprises 78 residues: Protein OPG173 (78 aa).

It belongs to the orthopoxvirus OPG173 protein family.

The protein localises to the host cytoplasm. Functionally, plays a role in the inhibition of host protein synthesis. Specifically, inhibits the initiation of cap-dependent and cap-independent translation. In turn, affects the outcome of infection by decreasing recruitment of inflammatory leukocytes and reducing the memory CD8+ T-cell response. This is Protein OPG173 (OPG173) from Vaccinia virus (strain Western Reserve) (VACV).